Reading from the N-terminus, the 253-residue chain is Uridylate kinase (253 aa).

Residue 26–29 (KLSG) participates in ATP binding. Residue Gly68 coordinates UMP. ATP-binding residues include Gly69 and Arg73. Residues Asp88 and 149–156 (TGNPFFTT) contribute to the UMP site. Residues Thr176, Tyr182, and Asp185 each contribute to the ATP site.

This sequence belongs to the UMP kinase family. In terms of assembly, homohexamer.

It localises to the cytoplasm. The catalysed reaction is UMP + ATP = UDP + ADP. It functions in the pathway pyrimidine metabolism; CTP biosynthesis via de novo pathway; UDP from UMP (UMPK route): step 1/1. Inhibited by UTP. In terms of biological role, catalyzes the reversible phosphorylation of UMP to UDP. The chain is Uridylate kinase from Chromohalobacter salexigens (strain ATCC BAA-138 / DSM 3043 / CIP 106854 / NCIMB 13768 / 1H11).